The chain runs to 574 residues: K(+)/H(+) antiporter NhaP2 (574 aa).

13 helical membrane-spanning segments follow: residues 6–26 (INSF…LSPM), 30–50 (LGIP…EDGL), 58–78 (YSTA…DGGM), 87–107 (VALW…TSIT), 109–129 (LMAA…GAIV), 173–193 (IAIL…VSFI), 196–216 (FGLG…LVNL), 219–239 (LAEG…YAVS), 242–262 (LGGS…NKPT), 271–291 (VLDG…GLLL), 299–319 (ILLP…PLAV), 335–355 (WFIS…VFPM), and 359–379 (LPGA…SLLI). The RCK C-terminal domain maps to 405-486 (SGVEIYPSSE…LDALSHLFSQ (82 aa)).

Belongs to the monovalent cation:proton antiporter 1 (CPA1) transporter (TC 2.A.36) family. NhaP2 subfamily.

It localises to the cell inner membrane. It carries out the reaction K(+)(in) + H(+)(out) = K(+)(out) + H(+)(in). In terms of biological role, k(+)/H(+) antiporter that extrudes potassium in exchange for external protons and maintains the internal concentration of potassium under toxic levels. The sequence is that of K(+)/H(+) antiporter NhaP2 from Shewanella sp. (strain W3-18-1).